The sequence spans 110 residues: MELLRLAILFAVTALAEIVGCYLPWLVLKQGKSLLLLVPAAMSLGLFAWLLTLHPSAAGRTYAAYGGMYIAVALGWLRFVDGIALTRWDLSGAAIALVGMAVIVMQPSTT.

4 helical membrane passes run 8-28 (ILFAVTALAEIVGCYLPWLVL), 33-53 (SLLLLVPAAMSLGLFAWLLTL), 65-85 (YGGMYIAVALGWLRFVDGIAL), and 88-108 (WDLSGAAIALVGMAVIVMQPS).

Belongs to the UPF0060 family.

Its subcellular location is the cell inner membrane. This chain is UPF0060 membrane protein Pnap_4944, found in Polaromonas naphthalenivorans (strain CJ2).